A 44-amino-acid polypeptide reads, in one-letter code: DNA-directed RNA polymerase subunit Rpo12 (44 aa).

Cys-8, Cys-22, and Cys-25 together coordinate Zn(2+).

It belongs to the archaeal Rpo12/eukaryotic RPC10 RNA polymerase subunit family. Part of the RNA polymerase complex. Zn(2+) is required as a cofactor.

Its subcellular location is the cytoplasm. The enzyme catalyses RNA(n) + a ribonucleoside 5'-triphosphate = RNA(n+1) + diphosphate. DNA-dependent RNA polymerase (RNAP) catalyzes the transcription of DNA into RNA using the four ribonucleoside triphosphates as substrates. The chain is DNA-directed RNA polymerase subunit Rpo12 from Natronomonas pharaonis (strain ATCC 35678 / DSM 2160 / CIP 103997 / JCM 8858 / NBRC 14720 / NCIMB 2260 / Gabara) (Halobacterium pharaonis).